The chain runs to 164 residues: Mineralocorticoid receptor (164 aa).

Positions 1 to 162 (QYSWMCLSSF…EFPRCWWRSS (162 aa)) constitute an NR LBD domain. The 21-hydroxyprogesterone site is built by R15 and T143. The aldosterone site is built by R15 and T143. The progesterone site is built by R15 and T143.

The protein belongs to the nuclear hormone receptor family. NR3 subfamily. Heteromultimeric cytoplasmic complex with HSP90, HSP70, and FKBP4, in the absence of ligand. After ligand binding, it translocates to the nucleus and binds to DNA as a homodimer and as a heterodimer with NR3C1. Binds the coactivator NCOA2. May interact with HSD11B2 in the absence of ligand. Binds the coactivators NCOA1, TIF1 and NRIP1. Post-translationally, phosphorylated.

Its subcellular location is the cytoplasm. It localises to the nucleus. It is found in the endoplasmic reticulum membrane. Functionally, receptor for both mineralocorticoids (MC) such as aldosterone and glucocorticoids (GC) such as corticosterone or cortisol. Binds to mineralocorticoid response elements (MRE) and transactivates target genes. The effect of MC is to increase ion and water transport and thus raise extracellular fluid volume and blood pressure and lower potassium levels. This Sus scrofa (Pig) protein is Mineralocorticoid receptor (NR3C2).